The following is a 225-amino-acid chain: Non-structural protein V (225 aa).

A nuclear localization signal region spans residues 65–72 (PVKPRRKK). The span at 145–157 (SNEPVSSAGSAQD) shows a compositional bias: polar residues. Positions 145–173 (SNEPVSSAGSAQDPNFKRGGANRERARGN) are disordered. His174, Cys193, Cys197, Cys209, Cys211, Cys214, Cys218, and Cys221 together coordinate Zn(2+).

Belongs to the paramyxoviruses V protein family. In terms of assembly, interacts with host IFIH1/MDA5 and DHX58/LGP2. Forms with host DDB1, CUL4A, STAT1 and STAT2 the HPIV2 virus V-dependent complex (VDC); this complex targets host STAT2 to proteasomal degradation.

Its subcellular location is the host nucleus. Functionally, plays an essential role in the inhibition of host immune response. Prevents the establishment of cellular antiviral state by blocking interferon-alpha/beta (IFN-alpha/beta) production and signaling pathway. Interacts with host IFIH1/MDA5 and DHX58/LGP2 to inhibit the transduction pathway involved in the activation of IFN-beta promoter, thus protecting the virus against cell antiviral state. Efficiently blocks type I IFN signaling following infection by targeting host STAT2 for proteasomal degradation. Also plays a role in viral growth by promoting host RhoA-induced F-actin formation. The sequence is that of Non-structural protein V (P/V) from Homo sapiens (Human).